A 681-amino-acid polypeptide reads, in one-letter code: Fibulin-1 (681 aa).

Positions 1 to 17 are cleaved as a signal peptide; the sequence is MDLYMIVLLSLCGLLRA. 33 disulfide bridges follow: C29-C55, C30-C62, C43-C63, C72-C103, C85-C104, C106-C125, C107-C138, C114-C139, C162-C171, C167-C176, C178-C191, C197-C210, C204-C219, C225-C237, C243-C256, C250-C265, C271-C283, C289-C301, C317-C330, C336-C348, C343-C357, C359-C372, C378-C390, C386-C399, C401-C414, C420-C429, C440-C454, C460-C473, C469-C482, C484-C498, C504-C517, C511-C526, and C531-C553. Anaphylatoxin-like domains follow at residues 29–63, 68–107, and 108–139; these read CCED…EQCC, EDSI…CECC, and LLGS…RSCC. The EGF-like 1 domain maps to 158 to 192; sequence TEDQCRAAGCAQRCLNGTCSCLDGFKLKTDGKHCE. An N-linked (GlcNAc...) asparagine glycan is attached at N173. The EGF-like 2; calcium-binding domain maps to 193–238; it reads DINECLLGPHHCVTGERCINTLGSYRCQREISCGTGYELTDNNKCK. The region spanning 239–284 is the EGF-like 3; calcium-binding domain; that stretch reads DIDECDLGTHNCAAEMECQNTAGSFRCRPRMQCAAGFIQDALGSCI. The 47-residue stretch at 285-331 folds into the EGF-like 4; calcium-binding domain; sequence DINECVSVTALSRGQMCFNTVGSFICQRHSVTCGRGYHLNAEGTRCV. An EGF-like 5; calcium-binding domain is found at 332 to 373; sequence DIDECAGPDNSCDGHGCINLVGSYRCECRTGFIFNSISRSCE. Residues 374–415 form the EGF-like 6; calcium-binding domain; that stretch reads DIDECRNYPGRLCAHKCENILGSYKCSCTAGFKLADDGRNCD. Residues 416–455 enclose the EGF-like 7; calcium-binding domain; the sequence is DVNECESSPCSQGCANVYGSYQSYCRRGYQLSDADGITCE. The region spanning 456-499 is the EGF-like 8; calcium-binding domain; sequence DIDECALPTGGHICSYRCHNTPGSFHCTCPASGYTLAANGRSCQ. The EGF-like 9; calcium-binding domain maps to 500–554; that stretch reads DIDECLTGTHSCSESESCFNIQGGFRCLSFDCPANYRRSGDTRPRVDRADIIRCV.

Belongs to the fibulin family. Homomultimerizes and interacts with various extracellular matrix components such as FN1, LAMA1, NID, AGC1 and CSPG2.

Its subcellular location is the secreted. It is found in the extracellular space. The protein resides in the extracellular matrix. Functionally, incorporated into fibronectin-containing matrix fibers. May play a role in cell adhesion and migration along protein fibers within the extracellular matrix (ECM). Could be important for certain developmental processes and contribute to the supramolecular organization of ECM architecture, in particular to those of basement membranes. In Danio rerio (Zebrafish), this protein is Fibulin-1 (fbln1).